A 174-amino-acid chain; its full sequence is Large ribosomal subunit protein uL10 (174 aa).

The protein belongs to the universal ribosomal protein uL10 family. In terms of assembly, part of the ribosomal stalk of the 50S ribosomal subunit. The N-terminus interacts with L11 and the large rRNA to form the base of the stalk. The C-terminus forms an elongated spine to which L12 dimers bind in a sequential fashion forming a multimeric L10(L12)X complex.

Its function is as follows. Forms part of the ribosomal stalk, playing a central role in the interaction of the ribosome with GTP-bound translation factors. In Bordetella bronchiseptica (strain ATCC BAA-588 / NCTC 13252 / RB50) (Alcaligenes bronchisepticus), this protein is Large ribosomal subunit protein uL10.